The sequence spans 207 residues: Cytochrome c biogenesis ATP-binding export protein CcmA (207 aa).

The 204-residue stretch at 3–206 folds into the ABC transporter domain; sequence LMAEGLSARR…AKSLEMTGFV (204 aa). 35-42 lines the ATP pocket; that stretch reads GPNGAGKS.

It belongs to the ABC transporter superfamily. CcmA exporter (TC 3.A.1.107) family. The complex is composed of two ATP-binding proteins (CcmA) and two transmembrane proteins (CcmB).

It is found in the cell inner membrane. It catalyses the reaction heme b(in) + ATP + H2O = heme b(out) + ADP + phosphate + H(+). Functionally, part of the ABC transporter complex CcmAB involved in the biogenesis of c-type cytochromes; once thought to export heme, this seems not to be the case, but its exact role is uncertain. Responsible for energy coupling to the transport system. The protein is Cytochrome c biogenesis ATP-binding export protein CcmA of Rhizobium meliloti (strain 1021) (Ensifer meliloti).